Here is a 163-residue protein sequence, read N- to C-terminus: Nucleotide-binding protein YajQ (163 aa).

The protein belongs to the YajQ family.

In terms of biological role, nucleotide-binding protein. The protein is Nucleotide-binding protein YajQ of Escherichia coli O127:H6 (strain E2348/69 / EPEC).